The sequence spans 305 residues: tRNA pseudouridine synthase B (305 aa).

Asp-48 functions as the Nucleophile in the catalytic mechanism.

It belongs to the pseudouridine synthase TruB family. Type 1 subfamily.

It catalyses the reaction uridine(55) in tRNA = pseudouridine(55) in tRNA. Responsible for synthesis of pseudouridine from uracil-55 in the psi GC loop of transfer RNAs. This is tRNA pseudouridine synthase B from Pseudomonas putida (strain ATCC 700007 / DSM 6899 / JCM 31910 / BCRC 17059 / LMG 24140 / F1).